The following is a 69-amino-acid chain: Cell division protein CrgA (69 aa).

Helical transmembrane passes span 14–34 (VWFPTIMFGLMGTGAVWMVLF) and 45–65 (AVGTWNILIAFGIIMAGFAMM).

This sequence belongs to the CrgA family.

The protein localises to the cell membrane. Its function is as follows. Involved in cell division. This chain is Cell division protein CrgA, found in Tropheryma whipplei (strain TW08/27) (Whipple's bacillus).